A 395-amino-acid chain; its full sequence is MQERHLFTSESVSEGHPDKIADQISDAILDALLAQDPDSRVACETSVTTGLVLVFGEISTKAYVDIQKVVRQTIKEIGYTDGQYGFDGDNCAVLVAIDEQSPDIAQGVDDSLETREGDADPLDQIGAGDQGLMFGYAVNETPELMPLPIELSHALMRRIAMLRKQAVLDYLRPDAKAEVTVEYDDNDQPLRVDTVVLSTQHDPDVTLDRIRQDVIEQVIKPTIPADLLDDQTKYFINPTGRFVIGGPQGDAGLTGRKIIVDTYGGAARHGGGAFSGKDATKVDRSASYAARYIAKNIVAAELAQKCEVQIAYAIGVAEPVSVYVNTFGTGTVAEAKLATAVRDLFDLRPAGIIQMLDLKRPIYKQTAAYGHFGRTDIDLPWEHTDKVDALKAACK.

Residue His-16 coordinates ATP. Asp-18 serves as a coordination point for Mg(2+). Position 44 (Glu-44) interacts with K(+). 2 residues coordinate L-methionine: Glu-57 and Gln-100. Residues 100-110 (QSPDIAQGVDD) are flexible loop. Residues 174–176 (DAK), 241–242 (RF), Asp-250, 256–257 (RK), Ala-273, and Lys-277 each bind ATP. Asp-250 contributes to the L-methionine binding site. L-methionine is bound at residue Lys-281.

The protein belongs to the AdoMet synthase family. Homotetramer; dimer of dimers. Mg(2+) serves as cofactor. Requires K(+) as cofactor.

The protein localises to the cytoplasm. The enzyme catalyses L-methionine + ATP + H2O = S-adenosyl-L-methionine + phosphate + diphosphate. The protein operates within amino-acid biosynthesis; S-adenosyl-L-methionine biosynthesis; S-adenosyl-L-methionine from L-methionine: step 1/1. In terms of biological role, catalyzes the formation of S-adenosylmethionine (AdoMet) from methionine and ATP. The overall synthetic reaction is composed of two sequential steps, AdoMet formation and the subsequent tripolyphosphate hydrolysis which occurs prior to release of AdoMet from the enzyme. The chain is S-adenosylmethionine synthase from Levilactobacillus brevis (strain ATCC 367 / BCRC 12310 / CIP 105137 / JCM 1170 / LMG 11437 / NCIMB 947 / NCTC 947) (Lactobacillus brevis).